The following is a 975-amino-acid chain: Aminopeptidase N (975 aa).

The Cytoplasmic portion of the chain corresponds to 1–11 (MAKGFYISKAL). The helical; Signal-anchor for type II membrane protein transmembrane segment at 12–32 (GILAIVLGIAAVSTIIALSVV) threads the bilayer. The tract at residues 33–74 (YAQEKNKNAESSPVSSPVSSPVSSPVSPTNPSTTAATTLAQS) is cytosolic Ser/Thr-rich junction. Topologically, residues 33–975 (YAQEKNKNAE…VLQWFRENSQ (943 aa)) are extracellular. Residues 41–68 (AESSPVSSPVSSPVSSPVSPTNPSTTAA) are disordered. Positions 43–59 (SSPVSSPVSSPVSSPVS) are enriched in low complexity. The interval 75 to 975 (KPWNHYRLPK…VLQWFRENSQ (901 aa)) is metalloprotease. A glycan (N-linked (GlcNAc...) asparagine) is linked at Asn-134. Sulfotyrosine is present on Tyr-182. N-linked (GlcNAc...) asparagine glycosylation is found at Asn-240 and Asn-271. Position 358 to 362 (358 to 362 (GAMEN)) interacts with substrate. Residue His-394 participates in Zn(2+) binding. Glu-395 serves as the catalytic Proton acceptor. 2 residues coordinate Zn(2+): His-398 and Glu-417. Residues Tyr-425 and Tyr-430 each carry the sulfotyrosine modification. 5 N-linked (GlcNAc...) asparagine glycosylation sites follow: Asn-533, Asn-580, Asn-633, Asn-689, and Asn-747. 2 disulfides stabilise this stretch: Cys-769-Cys-776 and Cys-806-Cys-842. An N-linked (GlcNAc...) asparagine glycan is attached at Asn-826.

This sequence belongs to the peptidase M1 family. As to quaternary structure, (Microbial infection) Interacts with CCoV spike glycoprotein. In terms of assembly, homodimer. Interacts with SLC6A19. It depends on Zn(2+) as a cofactor. Post-translationally, sulfated. N- and O-glycosylated. In terms of processing, may undergo proteolysis and give rise to a soluble form.

It localises to the cell membrane. The enzyme catalyses Release of an N-terminal amino acid, Xaa-|-Yaa- from a peptide, amide or arylamide. Xaa is preferably Ala, but may be most amino acids including Pro (slow action). When a terminal hydrophobic residue is followed by a prolyl residue, the two may be released as an intact Xaa-Pro dipeptide.. In terms of biological role, broad specificity aminopeptidase which plays a role in the final digestion of peptides generated from hydrolysis of proteins by gastric and pancreatic proteases. Also involved in the processing of various peptides including peptide hormones, such as angiotensin III and IV, neuropeptides, and chemokines. May also be involved the cleavage of peptides bound to major histocompatibility complex class II molecules of antigen presenting cells. May have a role in angiogenesis and promote cholesterol crystallization. May have a role in amino acid transport by acting as binding partner of amino acid transporter SLC6A19 and regulating its activity. (Microbial infection) Probable receptor for canine coronavirus (CCoV). In Canis lupus familiaris (Dog), this protein is Aminopeptidase N (ANPEP).